Reading from the N-terminus, the 175-residue chain is Clathrin-associated protein AP-3 complex component APS3 (175 aa).

Belongs to the adaptor complexes small subunit family. In terms of assembly, adaptor protein complex 3 (AP-3) is a heterotetramer composed of 2 large adaptins, a medium adaptin and a small adaptin.

It localises to the golgi apparatus. The protein resides in the cytoplasmic vesicle membrane. Functionally, part of the AP-3 complex, an adapter-related complex which is not clathrin-associated. The complex is associated with the Golgi region as well as more peripheral structures. It facilitates the budding of vesicles from the Golgi membrane. Involved in vacuolar trafficking and contributes to hyphal growth and pathogenesis. In Candida albicans (strain SC5314 / ATCC MYA-2876) (Yeast), this protein is Clathrin-associated protein AP-3 complex component APS3 (APS3).